We begin with the raw amino-acid sequence, 312 residues long: 6-hydroxy-3-succinoylpyridine 3-monooxygenase HspA (312 aa).

Residues 14–210 enclose the NYN domain; that stretch reads IYIDGYNFYY…RSANTDLIKF (197 aa).

It catalyses the reaction 4-(6-hydroxypyridin-3-yl)-4-oxobutanoate + 2 NADH + O2 + 2 H(+) = 2,5-dihydroxypyridine + succinate semialdehyde + 2 NAD(+) + H2O. It functions in the pathway alkaloid degradation; nicotine degradation. In terms of biological role, involved in the nicotine degradation. Catalyzes the cleavage of 6-hydroxy-3-succinoylpyridine (HSP) by incorporation of oxygen at the 3-position to produce to 2,5-dihydroxypyridine (DHP) and succinic semialdehyde. The polypeptide is 6-hydroxy-3-succinoylpyridine 3-monooxygenase HspA (Pseudomonas putida (strain DSM 28022 / S16)).